We begin with the raw amino-acid sequence, 216 residues long: Thymidylate kinase (216 aa).

10-17 is a binding site for ATP; sequence GIDGCGKT.

This sequence belongs to the thymidylate kinase family.

The enzyme catalyses dTMP + ATP = dTDP + ADP. In terms of biological role, phosphorylation of dTMP to form dTDP in both de novo and salvage pathways of dTTP synthesis. The sequence is that of Thymidylate kinase from Prochlorococcus marinus (strain MIT 9313).